The sequence spans 235 residues: Exosome complex component Rrp4 (235 aa).

In terms of domain architecture, S1 motif spans 63-137 (GDLVIGYVTD…DEYPIILTLK (75 aa)). The KH domain occupies 147 to 203 (GTVVEITPVKVPRVIGKRGSMLNTLMELGCDIVVGQNGRIWVKCKDPRDEVFLASLI).

It belongs to the RRP4 family. As to quaternary structure, component of the archaeal exosome complex. Forms a trimer of Rrp4 and/or Csl4 subunits. The trimer associates with a hexameric ring-like arrangement composed of 3 Rrp41-Rrp42 heterodimers.

Its subcellular location is the cytoplasm. In terms of biological role, non-catalytic component of the exosome, which is a complex involved in RNA degradation. Increases the RNA binding and the efficiency of RNA degradation. Confers strong poly(A) specificity to the exosome. The sequence is that of Exosome complex component Rrp4 from Pyrobaculum aerophilum (strain ATCC 51768 / DSM 7523 / JCM 9630 / CIP 104966 / NBRC 100827 / IM2).